The following is a 641-amino-acid chain: Sodium-dependent nutrient amino acid transporter 1 (641 aa).

The segment at 1–36 is disordered; it reads MELKGVQPSNGSANGNGTTNAASTEKTDAEKHTPER. The Cytoplasmic portion of the chain corresponds to 1–38; it reads MELKGVQPSNGSANGNGTTNAASTEKTDAEKHTPERTN. Positions 9-24 are enriched in low complexity; that stretch reads SNGSANGNGTTNAAST. The segment covering 25 to 35 has biased composition (basic and acidic residues); it reads EKTDAEKHTPE. Transmembrane regions (helical) follow at residues 39-59, 72-92, and 109-129; these read WGNG…LGNV, GAFL…MYYL, and SVVP…ICII. Residues Asn183 and Asn188 are each glycosylated (N-linked (GlcNAc...) asparagine). 9 helical membrane passes run 229-249, 258-278, 307-327, 341-361, 401-421, 441-461, 474-494, 516-536, and 552-572; these read PDWK…LVIM, AAYF…IRAV, AVVQ…MFAS, IVTT…FAIL, LFSV…IVAL, VALI…TPGG, TYVV…VYGL, CWSF…MVTI, and IAGW…GLWY.

It belongs to the sodium:neurotransmitter symporter (SNF) (TC 2.A.22) family.

The protein localises to the membrane. Its function is as follows. Unusual broad substrate spectrum amino acid:sodium cotransporter that promotes absorption of the D isomers of essential amino acids. Neutral amino acids are the preferred substrates, especially methionine and phenylalanine. This Drosophila erecta (Fruit fly) protein is Sodium-dependent nutrient amino acid transporter 1.